A 105-amino-acid chain; its full sequence is Thioredoxin (105 aa).

The 104-residue stretch at 2–105 (VKSVGNLADF…KLEETIKSLV (104 aa)) folds into the Thioredoxin domain. Active-site nucleophile residues include cysteine 32 and cysteine 35. A disulfide bridge connects residues cysteine 32 and cysteine 35. S-nitrosocysteine occurs at positions 69 and 73.

This sequence belongs to the thioredoxin family. Post-translationally, may be nitrosylated on several cysteine residues, depending on the oxidation state. Nitrosylated Cys-73 may serve as donor for nitrosylation of target proteins.

It is found in the nucleus. The protein resides in the cytoplasm. It localises to the secreted. Functionally, participates in various redox reactions through the reversible oxidation of its active center dithiol to a disulfide and catalyzes dithiol-disulfide exchange reactions. Plays a role in the reversible S-nitrosylation of cysteine residues in target proteins, and thereby contributes to the response to intracellular nitric oxide. Nitrosylates the active site Cys of CASP3 in response to nitric oxide (NO), and thereby inhibits caspase-3 activity. Induces the FOS/JUN AP-1 DNA binding activity in ionizing radiation (IR) cells through its oxidation/reduction status and stimulates AP-1 transcriptional activity. This Gallus gallus (Chicken) protein is Thioredoxin (TXN).